Consider the following 219-residue polypeptide: Large ribosomal subunit protein uL16 (219 aa).

The protein belongs to the universal ribosomal protein uL16 family. As to quaternary structure, component of the small ribosomal subunit. Mature ribosomes consist of a small (40S) and a large (60S) subunit. The 40S subunit contains about 33 different proteins and 1 molecule of RNA (18S). The 60S subunit contains about 49 different proteins and 3 molecules of RNA (25S, 5.8S and 5S).

The sequence is that of Large ribosomal subunit protein uL16 (RPL10) from Encephalitozoon cuniculi (strain GB-M1) (Microsporidian parasite).